A 260-amino-acid chain; its full sequence is uncharacterized protein (260 aa).

Residues 4–231 (LHVDHVTHTY…PKELAAMLPF (228 aa)) enclose the ABC transporter domain. Position 40-47 (40-47 (GPSGCGKT)) interacts with ATP.

It belongs to the ABC transporter superfamily.

This is an uncharacterized protein from Bacillus subtilis (strain 168).